Here is a 130-residue protein sequence, read N- to C-terminus: MEILNQFSQFSPNMEAQGASSIPQPSQDAHEKARQQAENQETAKNGMISQILDQAAMQRLSNLAVAKPEKAQMVEAALINMARRGQLSGKMTDDGLKALMERVSAQTQKATSVKFDRRRNELDSDEELDL.

Polar residues-rich tracts occupy residues 1–27 (MEIL…QPSQ) and 36–46 (QAENQETAKNG). Disordered stretches follow at residues 1–46 (MEIL…AKNG) and 103–130 (VSAQ…ELDL). Residues 27–51 (QDAHEKARQQAENQETAKNGMISQI) are a coiled coil.

The protein belongs to the PDCD5 family.

This is an uncharacterized protein from Caenorhabditis elegans.